The sequence spans 206 residues: MSNESIKAEQDLIQEGVESEVSTAEASLVDELTQANFRIEELEQLLADALAKVEEQKDSVIRAAAEVDNIRRRAAMDVEKANKFALEKFANELLPVLDNMERALMGTNPEDEATKAIYQGVELTQKSLLTAVAKFGVKQIDPQGESFNPDQHQAIGMQPSADFPANTVMLVMQKGYELNSRLLRPAMVMVSQGGPSQETATIDIEA.

The protein belongs to the GrpE family. Homodimer.

It localises to the cytoplasm. Participates actively in the response to hyperosmotic and heat shock by preventing the aggregation of stress-denatured proteins, in association with DnaK and GrpE. It is the nucleotide exchange factor for DnaK and may function as a thermosensor. Unfolded proteins bind initially to DnaJ; upon interaction with the DnaJ-bound protein, DnaK hydrolyzes its bound ATP, resulting in the formation of a stable complex. GrpE releases ADP from DnaK; ATP binding to DnaK triggers the release of the substrate protein, thus completing the reaction cycle. Several rounds of ATP-dependent interactions between DnaJ, DnaK and GrpE are required for fully efficient folding. The polypeptide is Protein GrpE (Shewanella sp. (strain W3-18-1)).